A 141-amino-acid chain; its full sequence is uncharacterized protein (141 aa).

2 consecutive transmembrane segments (helical) span residues L41 to F61 and I95 to F115.

The protein localises to the cell membrane. This is an uncharacterized protein from Rickettsia prowazekii (strain Madrid E).